The primary structure comprises 632 residues: MNGAGPGPAAAAPVPVPVPVPDWRQFCELHAQAAAVDFAHKFCRFLRDNPAYDTPDAGASFSRHFAANFLDVFGEEVRRVLVAGPTTRGAAVSAEAMEPELADTSALKAAPYGHSRSSEDVSTHAATKARVRKGFSLRNMSLCVVDGVRDMWHRRASPEPDAAAAPRTAEPRDKWTRRLRLSRTLAAKVELVDIQREGALRFMVADDAAAGSGGSAQWQKCRLLLRRAVAEERFRLEFFVPPKASRPKVSIPLSAIIEVRTTMPLEMPEKDNTFVLKVENGAEYILETIDSLQKHSWVADIQGCVDPGDSEEDTELSCTRGGCLASRVASCSCELLTDAVDLPRPPETTAVGAVVTAPHSRGRDAVRESLIHVPLETFLQTLESPGGSGSDSNNTGEQGAETDPEAEPELELSDYPWFHGTLSRVKAAQLVLAGGPRNHGLFVIRQSETRPGEYVLTFNFQGKAKHLRLSLNGHGQCHVQHLWFQSVLDMLRHFHTHPIPLESGGSADITLRSYVRAQDPPPEPGPTPPAAPASPACWSDSPGQHYFSSLAAAACPPASPSDAAGASSSSASSSSAASGPAPPRPVEGQLSARSRSNSAERLLEAVAATAAEEPPEAAPGRARAVENQYSFY.

The residue at position 52 (Y52) is a Phosphotyrosine. At S141 the chain carries Phosphoserine. In terms of domain architecture, PH spans 193-306 (DIQREGALRF…WVADIQGCVD (114 aa)). Residue S310 is modified to Phosphoserine. The interval 381 to 409 (TLESPGGSGSDSNNTGEQGAETDPEAEPE) is disordered. The span at 400–409 (AETDPEAEPE) shows a compositional bias: acidic residues. Positions 417-515 (WFHGTLSRVK…SADITLRSYV (99 aa)) constitute an SH2 domain. Disordered stretches follow at residues 516 to 537 (RAQDPPPEPGPTPPAAPASPAC) and 558 to 632 (ASPS…YSFY). Residues 519–532 (DPPPEPGPTPPAAP) show a composition bias toward pro residues. 2 stretches are compositionally biased toward low complexity: residues 558–579 (ASPSDAAGASSSSASSSSAASG) and 604–626 (EAVAATAAEEPPEAAPGRARAVE). Y629 is modified (phosphotyrosine).

It belongs to the SH2B adapter family. As to quaternary structure, homodimer. Interacts with KIT/c-KIT, SHC1, EPOR, PDGFR, VAV1 and VAV3. Interacts (via N-terminal region) with SHC1. Interacts (via the phosphorylated C-terminus) with GRB2. Interacts (via its SH2 domain) with EPOR, INSR and KIT. Interacts with GRB2 after B-cell antigen receptor stimulation. Interacts (via PH domain) with VAV3. Interacts with NTRK1, NTRK2 and NTRK3 (phosphorylated); after stimulation of the receptor by its extracellular ligand and subsequent autophosphorylation of the receptor. Binds INSR, GRB2, ASB6 and CAP. Insulin stimulation leads to dissociation of CAP. Binds CBS only when SH2B2/APS has become phosphorylated. INSR binding does not depend on the phosphorylation of SH2B2/APS. Post-translationally, tyrosine phosphorylated by JAK2, KIT and other kinases activated by B-cell receptor in response to stimulation with cytokines, IL3, IL5, PDGF, IGF1, IGF2, CSF2/GM-CSF and cross-linking of the B-cell receptor complex. In terms of tissue distribution, expressed in spleen, prostate, testis, uterus, small intestine and skeletal muscle. Among hematopoietic cell lines, expressed exclusively in B-cells. Not expressed in most tumor cell lines.

The protein localises to the cytoplasm. It is found in the cell membrane. Functionally, adapter protein for several members of the tyrosine kinase receptor family. Involved in multiple signaling pathways. May be involved in coupling from immunoreceptor to Ras signaling. Acts as a negative regulator of cytokine signaling in collaboration with CBL. Binds to EPOR and suppresses EPO-induced STAT5 activation, possibly through a masking effect on STAT5 docking sites in EPOR. Suppresses PDGF-induced mitogenesis. May induce cytoskeletal reorganization via interaction with VAV3. This is SH2B adapter protein 2 (SH2B2) from Homo sapiens (Human).